Consider the following 406-residue polypeptide: Cysteine--tRNA ligase (406 aa).

Cysteine 16 lines the Zn(2+) pocket. A 'HIGH' region motif is present at residues 18–28 (PTVYSDVHIGN). Zn(2+)-binding residues include cysteine 192, histidine 218, and glutamate 222. The short motif at 250–254 (KMAKS) is the 'KMSKS' region element. Lysine 253 serves as a coordination point for ATP.

It belongs to the class-I aminoacyl-tRNA synthetase family. Monomer. Zn(2+) is required as a cofactor.

The protein resides in the cytoplasm. The catalysed reaction is tRNA(Cys) + L-cysteine + ATP = L-cysteinyl-tRNA(Cys) + AMP + diphosphate. This Mesomycoplasma hyopneumoniae (strain J / ATCC 25934 / NCTC 10110) (Mycoplasma hyopneumoniae) protein is Cysteine--tRNA ligase.